Reading from the N-terminus, the 379-residue chain is Dual-specificity RNA methyltransferase RlmN (379 aa).

Glu-95 serves as the catalytic Proton acceptor. The Radical SAM core domain maps to 101–345 (EETRGTLCVS…TTVRKTRGDD (245 aa)). A disulfide bridge connects residues Cys-108 and Cys-350. [4Fe-4S] cluster contacts are provided by Cys-115, Cys-119, and Cys-122. Residues 176-177 (GE), Ser-208, 230-232 (SLH), and Asn-307 contribute to the S-adenosyl-L-methionine site. Cys-350 serves as the catalytic S-methylcysteine intermediate.

It belongs to the radical SAM superfamily. RlmN family. [4Fe-4S] cluster serves as cofactor.

The protein resides in the cytoplasm. The catalysed reaction is adenosine(2503) in 23S rRNA + 2 reduced [2Fe-2S]-[ferredoxin] + 2 S-adenosyl-L-methionine = 2-methyladenosine(2503) in 23S rRNA + 5'-deoxyadenosine + L-methionine + 2 oxidized [2Fe-2S]-[ferredoxin] + S-adenosyl-L-homocysteine. It carries out the reaction adenosine(37) in tRNA + 2 reduced [2Fe-2S]-[ferredoxin] + 2 S-adenosyl-L-methionine = 2-methyladenosine(37) in tRNA + 5'-deoxyadenosine + L-methionine + 2 oxidized [2Fe-2S]-[ferredoxin] + S-adenosyl-L-homocysteine. In terms of biological role, specifically methylates position 2 of adenine 2503 in 23S rRNA and position 2 of adenine 37 in tRNAs. m2A2503 modification seems to play a crucial role in the proofreading step occurring at the peptidyl transferase center and thus would serve to optimize ribosomal fidelity. This is Dual-specificity RNA methyltransferase RlmN from Burkholderia ambifaria (strain MC40-6).